A 451-amino-acid polypeptide reads, in one-letter code: Bifunctional protein GlmU (451 aa).

A pyrophosphorylase region spans residues 1 to 225 (MLEIIILAAG…EYEVLGVNNR (225 aa)). UDP-N-acetyl-alpha-D-glucosamine is bound by residues 7–10 (LAAG), Lys21, Gln72, 77–78 (GT), 99–101 (YGD), Gly136, Glu150, Asn165, and Asn223. Residue Asp101 coordinates Mg(2+). A Mg(2+)-binding site is contributed by Asn223. Positions 226 to 246 (LQQAELERIFQRQVAEELMVA) are linker. Residues 247–451 (GATLLDPARL…IKGWARPVKK (205 aa)) form an N-acetyltransferase region. UDP-N-acetyl-alpha-D-glucosamine contacts are provided by Arg329 and Lys347. The active-site Proton acceptor is the His359. UDP-N-acetyl-alpha-D-glucosamine-binding residues include Tyr362 and Asn373. Residues Ala376, 382–383 (NY), Ser401, Ala419, and Arg436 each bind acetyl-CoA.

In the N-terminal section; belongs to the N-acetylglucosamine-1-phosphate uridyltransferase family. The protein in the C-terminal section; belongs to the transferase hexapeptide repeat family. In terms of assembly, homotrimer. Requires Mg(2+) as cofactor.

The protein resides in the cytoplasm. The enzyme catalyses alpha-D-glucosamine 1-phosphate + acetyl-CoA = N-acetyl-alpha-D-glucosamine 1-phosphate + CoA + H(+). It carries out the reaction N-acetyl-alpha-D-glucosamine 1-phosphate + UTP + H(+) = UDP-N-acetyl-alpha-D-glucosamine + diphosphate. It participates in nucleotide-sugar biosynthesis; UDP-N-acetyl-alpha-D-glucosamine biosynthesis; N-acetyl-alpha-D-glucosamine 1-phosphate from alpha-D-glucosamine 6-phosphate (route II): step 2/2. The protein operates within nucleotide-sugar biosynthesis; UDP-N-acetyl-alpha-D-glucosamine biosynthesis; UDP-N-acetyl-alpha-D-glucosamine from N-acetyl-alpha-D-glucosamine 1-phosphate: step 1/1. It functions in the pathway bacterial outer membrane biogenesis; LPS lipid A biosynthesis. Its function is as follows. Catalyzes the last two sequential reactions in the de novo biosynthetic pathway for UDP-N-acetylglucosamine (UDP-GlcNAc). The C-terminal domain catalyzes the transfer of acetyl group from acetyl coenzyme A to glucosamine-1-phosphate (GlcN-1-P) to produce N-acetylglucosamine-1-phosphate (GlcNAc-1-P), which is converted into UDP-GlcNAc by the transfer of uridine 5-monophosphate (from uridine 5-triphosphate), a reaction catalyzed by the N-terminal domain. In Saccharophagus degradans (strain 2-40 / ATCC 43961 / DSM 17024), this protein is Bifunctional protein GlmU.